Reading from the N-terminus, the 277-residue chain is Shikimate dehydrogenase (NADP(+)) (277 aa).

Residues 15 to 17 (SLS) and threonine 62 contribute to the shikimate site. Lysine 66 (proton acceptor) is an active-site residue. Shikimate-binding residues include asparagine 87 and aspartate 102. Residues 127–131 (GAGGA), 151–156 (NRTRDK), and isoleucine 219 each bind NADP(+). Tyrosine 221 lines the shikimate pocket. Glycine 242 is a binding site for NADP(+).

This sequence belongs to the shikimate dehydrogenase family. Homodimer.

It catalyses the reaction shikimate + NADP(+) = 3-dehydroshikimate + NADPH + H(+). It functions in the pathway metabolic intermediate biosynthesis; chorismate biosynthesis; chorismate from D-erythrose 4-phosphate and phosphoenolpyruvate: step 4/7. Involved in the biosynthesis of the chorismate, which leads to the biosynthesis of aromatic amino acids. Catalyzes the reversible NADPH linked reduction of 3-dehydroshikimate (DHSA) to yield shikimate (SA). The protein is Shikimate dehydrogenase (NADP(+)) of Bacillus mycoides (strain KBAB4) (Bacillus weihenstephanensis).